A 160-amino-acid chain; its full sequence is Arginine repressor (160 aa).

It belongs to the ArgR family.

The protein localises to the cytoplasm. It participates in amino-acid biosynthesis; L-arginine biosynthesis [regulation]. Functionally, regulates arginine biosynthesis genes. The polypeptide is Arginine repressor (Anaeromyxobacter dehalogenans (strain 2CP-1 / ATCC BAA-258)).